The primary structure comprises 482 residues: 2-succinylbenzoate--CoA ligase (482 aa).

The protein belongs to the ATP-dependent AMP-binding enzyme family. MenE subfamily.

The catalysed reaction is 2-succinylbenzoate + ATP + CoA = 2-succinylbenzoyl-CoA + AMP + diphosphate. Its pathway is quinol/quinone metabolism; 1,4-dihydroxy-2-naphthoate biosynthesis; 1,4-dihydroxy-2-naphthoate from chorismate: step 5/7. It functions in the pathway quinol/quinone metabolism; menaquinone biosynthesis. In terms of biological role, converts 2-succinylbenzoate (OSB) to 2-succinylbenzoyl-CoA (OSB-CoA). This Bacillus cereus (strain AH820) protein is 2-succinylbenzoate--CoA ligase.